Consider the following 398-residue polypeptide: LIM domain-binding protein 2 (398 aa).

Disordered stretches follow at residues 245 to 280 and 354 to 398; these read PPAEPTRQTTTKRRKRKNSTNNASNSNAGNNATSAY and DAAN…QASQ. Positions 263–279 are enriched in low complexity; sequence STNNASNSNAGNNATSA. The LIM interaction domain (LID) domain occupies 323–362; that stretch reads DVMVVGEPTLMGGEFGDEDERLITRLENTQYDAANGMDDE.

Belongs to the LDB family. Expressed in adult brain, lung, spleen and kidney. Isoform b is generally expressed at a higher level than isoform a.

It is found in the nucleus. In terms of biological role, binds to the LIM domain of a wide variety of LIM domain-containing transcription factors. The sequence is that of LIM domain-binding protein 2 from Xenopus laevis (African clawed frog).